A 217-amino-acid chain; its full sequence is 25 kDa ookinete surface antigen (217 aa).

Residues 1–16 (MNKLYSLFLFLFIQLS) form the signal peptide. The region spanning 30-59 (CKRGFLIQMSGHLECKCENDLVLVNEETCE) is the EGF-like 1; truncated domain. 3 EGF-like domains span residues 61–106 (KVLK…NVCI), 106–150 (IPNE…NKCS), and 153–193 (GETK…SICT). Cystine bridges form between Cys-65/Cys-80, Cys-74/Cys-92, Cys-94/Cys-105, Cys-110/Cys-120, Cys-115/Cys-133, Cys-135/Cys-149, Cys-157/Cys-168, Cys-161/Cys-177, and Cys-179/Cys-192. N-linked (GlcNAc...) asparagine glycosylation is present at Asn-112. Residues Asn-165 and Asn-187 are each glycosylated (N-linked (GlcNAc...) asparagine). A lipid anchor (GPI-anchor amidated serine) is attached at Ser-196. Positions 197-217 (AYNILNLSIMFILFSVCFFIM) are cleaved as a propeptide — removed in mature form. Residue Asn-202 is glycosylated (N-linked (GlcNAc...) asparagine).

The protein localises to the cell membrane. The protein is 25 kDa ookinete surface antigen of Plasmodium falciparum (isolate NF54).